Consider the following 712-residue polypeptide: 1,4-alpha-glucan branching enzyme GlgB (712 aa).

The active-site Nucleophile is aspartate 397. Catalysis depends on glutamate 450, which acts as the Proton donor.

It belongs to the glycosyl hydrolase 13 family. GlgB subfamily. As to quaternary structure, monomer.

It carries out the reaction Transfers a segment of a (1-&gt;4)-alpha-D-glucan chain to a primary hydroxy group in a similar glucan chain.. It participates in glycan biosynthesis; glycogen biosynthesis. Functionally, catalyzes the formation of the alpha-1,6-glucosidic linkages in glycogen by scission of a 1,4-alpha-linked oligosaccharide from growing alpha-1,4-glucan chains and the subsequent attachment of the oligosaccharide to the alpha-1,6 position. The chain is 1,4-alpha-glucan branching enzyme GlgB from Bradyrhizobium sp. (strain ORS 278).